The sequence spans 221 residues: GTP-binding nuclear protein Ran-1 (221 aa).

Residues 10-174 (DYPSFKLVIV…LYLARKLAGD (165 aa)) form the Small GTPase Ran-type domain. 21–28 (DGGTGKTT) serves as a coordination point for GTP. Residues 40–48 (KKYEPTIGV) are switch-I. GTP-binding positions include Gly-71, 125–128 (NKVD), and 153–155 (SAK). The interval 71-87 (GQEKFGGLRDGYYIHGQ) is switch-II.

It belongs to the small GTPase superfamily. Ran family. As to quaternary structure, found in a nuclear export complex with RanGTP, exportin and pre-miRNA. Interacts with RANBP1A and RANBP1B. Interacts with TRN1. Interacts with ATX1. Interacts with KPNB1. Binds to XPO1. Interacts with MOS14. Binds to NTF2B.

The protein localises to the nucleus. Its function is as follows. GTP-binding protein involved in nucleocytoplasmic transport. Required for the import of protein into the nucleus and also for RNA export. Involved in chromatin condensation and control of cell cycle. This chain is GTP-binding nuclear protein Ran-1 (RAN1), found in Arabidopsis thaliana (Mouse-ear cress).